We begin with the raw amino-acid sequence, 129 residues long: Small ribosomal subunit protein uS11 (129 aa).

This sequence belongs to the universal ribosomal protein uS11 family. Part of the 30S ribosomal subunit. Interacts with proteins S7 and S18. Binds to IF-3.

In terms of biological role, located on the platform of the 30S subunit, it bridges several disparate RNA helices of the 16S rRNA. Forms part of the Shine-Dalgarno cleft in the 70S ribosome. This chain is Small ribosomal subunit protein uS11, found in Listeria innocua serovar 6a (strain ATCC BAA-680 / CLIP 11262).